Reading from the N-terminus, the 394-residue chain is Elongation factor Tu (394 aa).

Positions 10–204 constitute a tr-type G domain; the sequence is KPHVNVGTIG…ALDSYIPTPE (195 aa). The interval 19–26 is G1; that stretch reads GHVDHGKT. A GTP-binding site is contributed by 19–26; the sequence is GHVDHGKT. Mg(2+) is bound at residue threonine 26. The interval 60–64 is G2; sequence GITIN. A G3 region spans residues 81–84; that stretch reads DCPG. Residues 81 to 85 and 136 to 139 contribute to the GTP site; these read DCPGH and NKCD. Residues 136 to 139 form a G4 region; that stretch reads NKCD. The tract at residues 174-176 is G5; that stretch reads SAL.

Belongs to the TRAFAC class translation factor GTPase superfamily. Classic translation factor GTPase family. EF-Tu/EF-1A subfamily. In terms of assembly, monomer.

It localises to the cytoplasm. It carries out the reaction GTP + H2O = GDP + phosphate + H(+). GTP hydrolase that promotes the GTP-dependent binding of aminoacyl-tRNA to the A-site of ribosomes during protein biosynthesis. This Neisseria gonorrhoeae (strain ATCC 700825 / FA 1090) protein is Elongation factor Tu.